The following is a 132-amino-acid chain: Large ribosomal subunit protein bL17 (132 aa).

This sequence belongs to the bacterial ribosomal protein bL17 family. In terms of assembly, part of the 50S ribosomal subunit. Contacts protein L32.

The protein is Large ribosomal subunit protein bL17 of Polaromonas sp. (strain JS666 / ATCC BAA-500).